We begin with the raw amino-acid sequence, 3469 residues long: Abnormal spindle-like microcephaly-associated protein homolog (3469 aa).

A disordered region spans residues 1–24 (MATRRAGRSWEVSPSGPRPAAGEA). A compositionally biased stretch (low complexity) spans 13 to 24 (SPSGPRPAAGEA). 6 positions are modified to phosphoserine: serine 273, serine 276, serine 361, serine 386, serine 420, and serine 599. Residues 913–1049 (KTSKDILLAF…LLWKIAFAFQ (137 aa)) enclose the Calponin-homology (CH) 1 domain. Residues 1050–1069 (VDISLNLDQLKEEIDFLKHT) adopt a coiled-coil conformation. Phosphoserine is present on serine 1095. One can recognise a Calponin-homology (CH) 2 domain in the interval 1102 to 1253 (SESIKLLMEW…YLSFLCSRLL (152 aa)). 38 consecutive IQ domains span residues 1258-1287 (ETRA…QDKA), 1339-1370 (QNES…IILQ), 1385-1414 (YLWA…MLKS), 1529-1560 (KRAA…VLQS), 1574-1605 (LKKI…LVIQ), 1624-1653 (TRSA…SIIK), 1647-1676 (ILTS…ATVK), 1720-1749 (MRES…AAIS), 1743-1774 (QRQA…LVIQ), 1793-1822 (VKRA…AALK), 1816-1845 (QSIA…STIK), 1866-1895 (TRAA…AAVR), 1889-1920 (ERQA…LVIQ), 1939-1970 (LREA…VIIQ), 1962-1993 (QHKC…RLIQ), 2012-2041 (TKAA…AAVT), 2035-2066 (CNRA…IIIQ), 2085-2116 (LKKT…TVIQ), 2108-2139 (LHMA…VIIQ), 2158-2189 (IMKA…TLIQ), 2181-2210 (MQSA…VTRT), 2231-2262 (LRHS…TLIQ), 2304-2333 (VQKA…AATA), 2327-2358 (VHRA…VVIQ), 2377-2408 (QRHS…TLIQ), 2400-2431 (MHSS…VFVQ), 2450-2481 (LKKA…VLIQ), 2523-2554 (QRRS…IIIQ), 2681-2712 (RHLA…AVIQ), 2731-2762 (VQKS…MVAS), 2851-2882 (QKRA…VVLQ), 2901-2930 (IRSS…STIK), 2924-2955 (IKDS…KIQA), 2946-2977 (QVKA…KIIQ), 3021-3050 (RHQA…AALT), 3071-3102 (LKKS…RLLH), 3173-3202 (QNRA…AISR), and 3196-3227 (FNNA…IRLS).

It is found in the cytoplasm. It localises to the cytoskeleton. The protein resides in the spindle. The protein localises to the nucleus. Probable role in mitotic spindle regulation and coordination of mitotic processes. May have a preferential role in regulating neurogenesis. The polypeptide is Abnormal spindle-like microcephaly-associated protein homolog (ASPM) (Canis lupus familiaris (Dog)).